Consider the following 206-residue polypeptide: Guanylate kinase (206 aa).

The region spanning 5–184 (GMLIVLSGPS…AAERIKAIIR (180 aa)) is the Guanylate kinase-like domain. 12–19 (GPSGVGKG) is a binding site for ATP.

Belongs to the guanylate kinase family.

The protein resides in the cytoplasm. The enzyme catalyses GMP + ATP = GDP + ADP. In terms of biological role, essential for recycling GMP and indirectly, cGMP. This Lactiplantibacillus plantarum (strain ATCC BAA-793 / NCIMB 8826 / WCFS1) (Lactobacillus plantarum) protein is Guanylate kinase.